We begin with the raw amino-acid sequence, 48 residues long: Sperm protamine P1 (48 aa).

The protein belongs to the protamine P1 family. In terms of assembly, cross-linked by interchain disulfide bonds around the DNA-helix. Testis.

The protein localises to the nucleus. It is found in the chromosome. Its function is as follows. Protamines substitute for histones in the chromatin of sperm during the haploid phase of spermatogenesis. They compact sperm DNA into a highly condensed, stable and inactive complex. The protein is Sperm protamine P1 (PRM1) of Cavia porcellus (Guinea pig).